A 238-amino-acid chain; its full sequence is Probable transcriptional regulatory protein MGAS2096_Spy0287 (238 aa).

This sequence belongs to the TACO1 family. YeeN subfamily.

The protein resides in the cytoplasm. The sequence is that of Probable transcriptional regulatory protein MGAS2096_Spy0287 from Streptococcus pyogenes serotype M12 (strain MGAS2096).